Here is a 233-residue protein sequence, read N- to C-terminus: Opacity protein opA67 (233 aa).

Ala1 is a signal peptide.

Belongs to the opacity porin family.

It is found in the cell outer membrane. Functionally, implicated in a number of adherence functions. OPA proteins are implicated in pathogenesis and are subject to phase variation. This is Opacity protein opA67 from Neisseria gonorrhoeae.